The following is a 277-amino-acid chain: Purine nucleoside phosphorylase 2 (277 aa).

Residues H65, 85–87 (RGH), and A117 each bind phosphate. E197 provides a ligand contact to a purine D-ribonucleoside. S216 contributes to the phosphate binding site. N239 contributes to the a purine D-ribonucleoside binding site.

The protein belongs to the PNP/MTAP phosphorylase family. As to quaternary structure, hexamer. Dimer of trimers.

The enzyme catalyses a purine D-ribonucleoside + phosphate = a purine nucleobase + alpha-D-ribose 1-phosphate. It participates in purine metabolism; xanthosine degradation. It functions in the pathway purine metabolism; purine nucleoside salvage. With respect to regulation, rapidly inactivated by p-chloromercuriphenylsulfonic acid (p-CMB). Dithiothreitol incubation restores the activity. Functionally, the purine nucleoside phosphorylases catalyze the phosphorolytic breakdown of the N-glycosidic bond in the beta-(deoxy)ribonucleoside molecules, with the formation of the corresponding free purine bases and pentose-1-phosphate. This protein can degrade all purine nucleosides including xanthosine, inosine and guanosine, but cannot cleave adenosine, deoxyadenosine or hypoxanthine arabinoside. Has a preference for the neutral over the monoanionic form of xanthosine. The sequence is that of Purine nucleoside phosphorylase 2 (xapA) from Escherichia coli (strain K12).